Consider the following 1588-residue polypeptide: Ubiquitin carboxyl-terminal hydrolase 54 (1588 aa).

An Omega-N-methylarginine modification is found at Arg-12. The region spanning 31 to 352 (KGLSNEPGQN…QPLLLLYADP (322 aa)) is the USP domain. The active-site Nucleophile is the Cys-42. Zn(2+) contacts are provided by His-67, Cys-69, Cys-74, Cys-77, His-133, Cys-145, Cys-150, His-153, Cys-166, Cys-169, Cys-225, and Cys-229. His-302 functions as the Proton acceptor in the catalytic mechanism. Basic and acidic residues-rich tracts occupy residues 380–391 (DSGHLTDSECNQ) and 424–434 (SEGETLKEKQA). Disordered stretches follow at residues 380–447 (DSGH…TSRL) and 459–519 (HSRP…PTWR). Ser-424 is subject to Phosphoserine. Polar residues-rich tracts occupy residues 436–445 (RNASKSSSTS) and 459–471 (HSRP…TNAA). A compositionally biased stretch (low complexity) spans 499 to 512 (TESTSSEARSSSSS). A phosphoserine mark is found at Ser-574, Ser-613, and Ser-616. Residues 601-616 (ESGYESSERNSSSPVS) are compositionally biased toward low complexity. Residues 601 to 620 (ESGYESSERNSSSPVSLDAA) are disordered. Residues 678–712 (TSKSELDELQEEVARRAQEQELRKKREKELEAAKG) are a coiled coil. 5 disordered regions span residues 801–839 (RSLQ…EQSV), 856–895 (DSEL…SPPG), 950–969 (EDNS…TTQD), 1093–1172 (TRDV…SRRR), and 1525–1562 (GSVL…SAGE). The span at 808 to 825 (QQQPPSQQPVQPSASLPS) shows a compositional bias: low complexity. Over residues 878-895 (SLVSPSPAQSVSQHSPPG) the composition is skewed to polar residues. A Phosphoserine modification is found at Ser-1138. Residues 1536 to 1547 (RRIDVPPDDDGR) show a composition bias toward basic and acidic residues.

Belongs to the peptidase C19 family.

It catalyses the reaction Thiol-dependent hydrolysis of ester, thioester, amide, peptide and isopeptide bonds formed by the C-terminal Gly of ubiquitin (a 76-residue protein attached to proteins as an intracellular targeting signal).. In terms of biological role, deubiquitinase that specifically mediates 'Lys-63'-linked deubiquitination of substrates with a polyubiquitin chain composed of at least 3 ubiquitins. Specifically recognizes ubiquitin chain in position S2 and catalyzes cleavage of polyubiquitin within 'Lys-63'-linked chains. Not able to deubiquitinate substrates with shorter ubiquitin chains. Mediates deubiquitination of PLK4, maintaining PLK4 stability by reducing its ubiquitination-mediated degradation. In Rattus norvegicus (Rat), this protein is Ubiquitin carboxyl-terminal hydrolase 54 (Usp54).